Reading from the N-terminus, the 296-residue chain is MKHIINSYEHTNDTARNNSDCPDVVLPEEIFFTISVIGILENLIVLLAVIKNKNLQSPMYFFICSLAISDMLGSLYKILENILIMFRNMGYLKPRGSFESTADDIIDCMFILSLLGSIFSLSVIAADRYITIFHALQYHSIVTMRRTIITLTIIWMFCTGSGITMVIFSHHIPTVLTFTSLFPLMLVFILCLYIHMFLLARSHARKISTLPRTNMKGAMTLTILLGVFIFCWAPFVLHVLLMTFCPNNPYCVCYMSLFQVNGMLIMCNAVIDPFIYAFRSPELRDAFKRMLFCNRY.

Topologically, residues 1–23 (MKHIINSYEHTNDTARNNSDCPD) are extracellular. N12 and N17 each carry an N-linked (GlcNAc...) asparagine glycan. 2 cysteine pairs are disulfide-bonded: C21–C253 and C245–C251. The chain crosses the membrane as a helical span at residues 24–49 (VVLPEEIFFTISVIGILENLIVLLAV). Over 50–58 (IKNKNLQSP) the chain is Cytoplasmic. The chain crosses the membrane as a helical span at residues 59 to 79 (MYFFICSLAISDMLGSLYKIL). Residues 80-104 (ENILIMFRNMGYLKPRGSFESTADD) are Extracellular-facing. Residues 105 to 126 (IIDCMFILSLLGSIFSLSVIAA) form a helical membrane-spanning segment. Over 127-147 (DRYITIFHALQYHSIVTMRRT) the chain is Cytoplasmic. A helical membrane pass occupies residues 148–168 (IITLTIIWMFCTGSGITMVIF). Topologically, residues 169–180 (SHHIPTVLTFTS) are extracellular. A helical transmembrane segment spans residues 181–199 (LFPLMLVFILCLYIHMFLL). At 200-217 (ARSHARKISTLPRTNMKG) the chain is on the cytoplasmic side. The helical transmembrane segment at 218–244 (AMTLTILLGVFIFCWAPFVLHVLLMTF) threads the bilayer. The Extracellular portion of the chain corresponds to 245 to 256 (CPNNPYCVCYMS). The chain crosses the membrane as a helical span at residues 257-278 (LFQVNGMLIMCNAVIDPFIYAF). Residues 279-296 (RSPELRDAFKRMLFCNRY) are Cytoplasmic-facing. C293 is lipidated: S-palmitoyl cysteine.

The protein belongs to the G-protein coupled receptor 1 family. Homodimer. Interacts with corticotropin (ACTH). Interacts with MRAP; this interaction targets MC2R to the plasma membrane. Interacts with MRAP2; competing with MRAP for binding to MC2R and impairing the binding of corticotropin (ACTH). In terms of processing, ubiquitinated by MGRN1 that may be involved in post-endocytic trafficking and/or degradation of internalized receptor.

The protein resides in the cell membrane. In terms of biological role, hormone receptor primarily expressed in adrenal cortex that plays a key role in regulating adrenocortical function. Upon corticotropin (ACTH) binding, facilitates the release of adrenal glucocorticoids, including cortisol and corticosterone. In addition, MC2R is required for fetal and neonatal adrenal gland development. Mechanistically, activates adenylate cyclase (cAMP), the MAPK cascade as well as the cAMP-dependent protein kinase A pathway leading to steroidogenic factor 1/NR5A1-mediated transcriptional activation. The sequence is that of Adrenocorticotropic hormone receptor (Mc2r) from Mus musculus (Mouse).